Reading from the N-terminus, the 105-residue chain is Large ribosomal subunit protein uL24 (105 aa).

It belongs to the universal ribosomal protein uL24 family. Part of the 50S ribosomal subunit.

In terms of biological role, one of two assembly initiator proteins, it binds directly to the 5'-end of the 23S rRNA, where it nucleates assembly of the 50S subunit. One of the proteins that surrounds the polypeptide exit tunnel on the outside of the subunit. The chain is Large ribosomal subunit protein uL24 from Xylella fastidiosa (strain M12).